Reading from the N-terminus, the 552-residue chain is Putative phosphate permease MT2339 (552 aa).

A run of 13 helical transmembrane segments spans residues 38-58, 69-89, 107-127, 146-166, 178-198, 213-233, 326-346, 360-380, 389-409, 437-457, 472-492, 493-513, and 526-546; these read WHLS…WWAF, ILVL…GNDV, ALLV…GDVT, DFMN…LFAN, IIGG…QGGA, VSWV…YGVI, VPLV…FKGF, FIIA…AKTL, TFLM…FSHG, AVPA…LWFI, MHPA…MGAT, VLGL…GVGI, and IVLA…VGLV.

Belongs to the inorganic phosphate transporter (PiT) (TC 2.A.20) family.

It localises to the cell membrane. Functionally, potential transporter for phosphate. The polypeptide is Putative phosphate permease MT2339 (Mycobacterium tuberculosis (strain CDC 1551 / Oshkosh)).